The following is a 444-amino-acid chain: Phosphoglucosamine mutase (444 aa).

Ser-102 acts as the Phosphoserine intermediate in catalysis. Positions 102, 239, 241, and 243 each coordinate Mg(2+). A Phosphoserine modification is found at Ser-102.

This sequence belongs to the phosphohexose mutase family. Requires Mg(2+) as cofactor. Activated by phosphorylation.

It catalyses the reaction alpha-D-glucosamine 1-phosphate = D-glucosamine 6-phosphate. Functionally, catalyzes the conversion of glucosamine-6-phosphate to glucosamine-1-phosphate. The chain is Phosphoglucosamine mutase from Mycolicibacterium paratuberculosis (strain ATCC BAA-968 / K-10) (Mycobacterium paratuberculosis).